The following is a 247-amino-acid chain: SPX domain-containing protein 5 (247 aa).

In terms of domain architecture, SPX spans 1 to 139 (MKFGKRLKRQ…GGVLRLPVIA (139 aa)). Residues 224–247 (SDWLIQSVQPPPPPPPSSPLIIPT) are disordered. The span at 232–241 (QPPPPPPPSS) shows a compositional bias: pro residues.

In Oryza sativa subsp. indica (Rice), this protein is SPX domain-containing protein 5 (SPX5).